The following is a 207-amino-acid chain: Superoxide dismutase [Mn] (207 aa).

Mn(2+) contacts are provided by His28, His76, Asp160, and His164.

This sequence belongs to the iron/manganese superoxide dismutase family. The cofactor is Mn(2+).

The catalysed reaction is 2 superoxide + 2 H(+) = H2O2 + O2. Functionally, destroys superoxide anion radicals which are normally produced within the cells and which are toxic to biological systems. The sequence is that of Superoxide dismutase [Mn] (sodA) from Nocardia asteroides.